Reading from the N-terminus, the 175-residue chain is MMAYIGFILSIMFVISFVGFSSKPSPIYGGLVLIMSGGFGCGIVMSFGGSFLGLMVFLIYLGGMLVVFGYTTAMATEQYPEVWVSSAAVLGAFVLGVLMEVVLVLYVYKNGEVEVVFNFSGVGDWAVSDNGGFGVFSEEIVGVSALYSYGVWIIIVTGWSLFVGVLVILEITRGA.

Transmembrane regions (helical) follow at residues Met-1–Ser-21, Ser-25–Met-45, Phe-47–Val-67, Ala-87–Val-107, Val-116–Phe-136, and Tyr-149–Leu-169.

The protein belongs to the complex I subunit 6 family. As to quaternary structure, core subunit of respiratory chain NADH dehydrogenase (Complex I) which is composed of 45 different subunits.

It is found in the mitochondrion inner membrane. The enzyme catalyses a ubiquinone + NADH + 5 H(+)(in) = a ubiquinol + NAD(+) + 4 H(+)(out). Its function is as follows. Core subunit of the mitochondrial membrane respiratory chain NADH dehydrogenase (Complex I) which catalyzes electron transfer from NADH through the respiratory chain, using ubiquinone as an electron acceptor. Essential for the catalytic activity and assembly of complex I. The sequence is that of NADH-ubiquinone oxidoreductase chain 6 (MT-ND6) from Ceratotherium simum (White rhinoceros).